Here is a 357-residue protein sequence, read N- to C-terminus: uncharacterized protein (357 aa).

This is an uncharacterized protein from Caenorhabditis elegans.